The following is a 213-amino-acid chain: Protein GrpE (213 aa).

The span at 1–23 (MSDEKKPEAETSESLQKREEKLA) shows a compositional bias: basic and acidic residues. Positions 1–43 (MSDEKKPEAETSESLQKREEKLAETLASEPAAQGEAEDAAAAG) are disordered. Over residues 29 to 43 (EPAAQGEAEDAAAAG) the composition is skewed to low complexity.

It belongs to the GrpE family. Homodimer.

Its subcellular location is the cytoplasm. Functionally, participates actively in the response to hyperosmotic and heat shock by preventing the aggregation of stress-denatured proteins, in association with DnaK and GrpE. It is the nucleotide exchange factor for DnaK and may function as a thermosensor. Unfolded proteins bind initially to DnaJ; upon interaction with the DnaJ-bound protein, DnaK hydrolyzes its bound ATP, resulting in the formation of a stable complex. GrpE releases ADP from DnaK; ATP binding to DnaK triggers the release of the substrate protein, thus completing the reaction cycle. Several rounds of ATP-dependent interactions between DnaJ, DnaK and GrpE are required for fully efficient folding. This chain is Protein GrpE, found in Parvibaculum lavamentivorans (strain DS-1 / DSM 13023 / NCIMB 13966).